The sequence spans 158 residues: NADH-quinone oxidoreductase subunit B (158 aa).

[4Fe-4S] cluster contacts are provided by Cys-37, Cys-38, Cys-102, and Cys-132.

This sequence belongs to the complex I 20 kDa subunit family. As to quaternary structure, NDH-1 is composed of 14 different subunits. Subunits NuoB, C, D, E, F, and G constitute the peripheral sector of the complex. The cofactor is [4Fe-4S] cluster.

The protein resides in the cell inner membrane. It catalyses the reaction a quinone + NADH + 5 H(+)(in) = a quinol + NAD(+) + 4 H(+)(out). Its function is as follows. NDH-1 shuttles electrons from NADH, via FMN and iron-sulfur (Fe-S) centers, to quinones in the respiratory chain. Couples the redox reaction to proton translocation (for every two electrons transferred, four hydrogen ions are translocated across the cytoplasmic membrane), and thus conserves the redox energy in a proton gradient. In Dechloromonas aromatica (strain RCB), this protein is NADH-quinone oxidoreductase subunit B.